Here is a 441-residue protein sequence, read N- to C-terminus: Amino-acid acetyltransferase (441 aa).

Residues 295–434 (EQVRRATIND…QALYNYQRRS (140 aa)) enclose the N-acetyltransferase domain.

It belongs to the acetyltransferase family. ArgA subfamily. As to quaternary structure, homohexamer.

It localises to the cytoplasm. The catalysed reaction is L-glutamate + acetyl-CoA = N-acetyl-L-glutamate + CoA + H(+). It participates in amino-acid biosynthesis; L-arginine biosynthesis; N(2)-acetyl-L-ornithine from L-glutamate: step 1/4. The polypeptide is Amino-acid acetyltransferase (Pectobacterium carotovorum subsp. carotovorum (strain PC1)).